A 379-amino-acid polypeptide reads, in one-letter code: Mating-type protein MAT-1 (379 aa).

Positions R60–R117 form a DNA-binding region, alpha box.

It belongs to the MATALPHA1 family.

It is found in the nucleus. Functionally, mating type proteins are sequence specific DNA-binding proteins that act as master switches in fungal differentiation by controlling gene expression in a cell type-specific fashion. Transcriptional activator that induces the transcription of alpha-specific genes. The sequence is that of Mating-type protein MAT-1 (MAT1) from Curvularia kusanoi (Cochliobolus kusanoi).